A 154-amino-acid polypeptide reads, in one-letter code: Regulatory protein RecX (154 aa).

Belongs to the RecX family.

The protein localises to the cytoplasm. Its function is as follows. Modulates RecA activity. The sequence is that of Regulatory protein RecX from Trichlorobacter lovleyi (strain ATCC BAA-1151 / DSM 17278 / SZ) (Geobacter lovleyi).